The following is a 545-amino-acid chain: Ribulokinase (545 aa).

The protein belongs to the ribulokinase family.

It carries out the reaction D-ribulose + ATP = D-ribulose 5-phosphate + ADP + H(+). The catalysed reaction is L-ribulose + ATP = L-ribulose 5-phosphate + ADP + H(+). The protein operates within carbohydrate degradation; L-arabinose degradation via L-ribulose; D-xylulose 5-phosphate from L-arabinose (bacterial route): step 2/3. The chain is Ribulokinase from Staphylococcus aureus (strain Mu3 / ATCC 700698).